The following is an 85-amino-acid chain: Putative membrane protein insertion efficiency factor (85 aa).

The protein belongs to the UPF0161 family.

The protein localises to the cell inner membrane. Functionally, could be involved in insertion of integral membrane proteins into the membrane. The protein is Putative membrane protein insertion efficiency factor of Dictyoglomus thermophilum (strain ATCC 35947 / DSM 3960 / H-6-12).